We begin with the raw amino-acid sequence, 1012 residues long: Cellulose synthase-like protein D5 (1012 aa).

Residues 1-81 are disordered; that stretch reads MSVDYANYTV…ARVPAPSSNK (81 aa). A compositionally biased stretch (low complexity) spans 20–37; it reads PSGGAPPAAPSAGGARPG. Over residues 57 to 69 the composition is skewed to basic and acidic residues; it reads GGGDDGAKMDRRL. A run of 2 helical transmembrane segments spans residues 150–170 and 180–200; these read ILSP…LFLV and ALWL…SWLL. Residue Asp280 is part of the active site. Residues 597–620 are disordered; the sequence is PRQGSEAMPGAGGGRSGGGSVGGD. Residues 606–618 are compositionally biased toward gly residues; the sequence is GAGGGRSGGGSVG. The active site involves Asp717. 6 helical membrane passes run 799–819, 825–845, 871–891, 914–934, 948–968, and 978–998; these read LFLI…QFIV, TFLS…LLEV, LAAV…SFTL, SLFI…VVGV, LLGG…FAKG, and TIVY…WITI.

The protein belongs to the glycosyltransferase 2 family. Plant cellulose synthase-like D subfamily.

It is found in the golgi apparatus membrane. In terms of biological role, thought to be a Golgi-localized beta-glycan synthase that polymerize the backbones of noncellulosic polysaccharides (hemicelluloses) of plant cell wall. The chain is Cellulose synthase-like protein D5 (CSLD5) from Oryza sativa subsp. japonica (Rice).